The sequence spans 1402 residues: Phospholipid-transporting ATPase dnf2 (1402 aa).

Transmembrane regions (helical) follow at residues 109–129, 135–155, 457–477, and 501–521; these read FQNV…ISIF, PGLA…KDAI, LNFI…GIAW, and VVTF…SLYI. Aspartate 569 functions as the 4-aspartylphosphate intermediate in the catalytic mechanism. Residues aspartate 569, lysine 570, threonine 571, glutamate 700, phenylalanine 741, serine 743, lysine 746, lysine 764, arginine 799, threonine 800, threonine 879, glycine 880, aspartate 881, arginine 986, and lysine 992 each contribute to the ATP site. Residue aspartate 569 participates in Mg(2+) binding. Threonine 571 serves as a coordination point for Mg(2+). Position 1012 (aspartate 1012) interacts with Mg(2+). The ATP site is built by asparagine 1015 and aspartate 1016. Aspartate 1016 contacts Mg(2+). 6 helical membrane-spanning segments follow: residues 1066–1086, 1101–1121, 1151–1171, 1193–1213, 1218–1238, and 1260–1280; these read VAEM…TLFW, YTYV…VMGV, IFIG…FFSF, LGVY…ILNQ, VFSI…TGVY, and FWAV…LFMT. Residue lysine 1275 participates in a 1,2-diacyl-sn-glycero-3-phospho-L-serine binding.

Belongs to the cation transport ATPase (P-type) (TC 3.A.3) family. Type IV subfamily. Mg(2+) serves as cofactor.

It is found in the cell membrane. It localises to the endoplasmic reticulum membrane. The enzyme catalyses ATP + H2O + phospholipidSide 1 = ADP + phosphate + phospholipidSide 2.. It catalyses the reaction a 1,2-diacyl-sn-glycero-3-phosphoethanolamine(out) + ATP + H2O = a 1,2-diacyl-sn-glycero-3-phosphoethanolamine(in) + ADP + phosphate + H(+). The catalysed reaction is a 1,2-diacyl-sn-glycero-3-phosphocholine(out) + ATP + H2O = a 1,2-diacyl-sn-glycero-3-phosphocholine(in) + ADP + phosphate + H(+). It carries out the reaction a beta-D-glucosyl-(1&lt;-&gt;1')-N-acylsphing-4-enine(out) + ATP + H2O = a beta-D-glucosyl-(1&lt;-&gt;1')-N-acylsphing-4-enine(in) + ADP + phosphate + H(+). The enzyme catalyses a 1,2-diacyl-sn-glycero-3-phospho-L-serine(out) + ATP + H2O = a 1,2-diacyl-sn-glycero-3-phospho-L-serine(in) + ADP + phosphate + H(+). Functionally, catalytic component of a P4-ATPase flippase complex which catalyzes the hydrolysis of ATP coupled to the transport of glucosylceramide, phosphatidylcholine, phosphatidylethanolamine, and small amounts of phosphatidylserine from the lumenal to the cytosolic leaflet of the cell membrane and ensures the maintenance of asymmetric distribution of phospholipids. This chain is Phospholipid-transporting ATPase dnf2, found in Schizosaccharomyces pombe (strain 972 / ATCC 24843) (Fission yeast).